The primary structure comprises 546 residues: Inosine-5'-monophosphate dehydrogenase (546 aa).

2 consecutive CBS domains span residues phenylalanine 135–isoleucine 197 and methionine 198–serine 254. Residues aspartate 292–serine 294 and glycine 342–glycine 344 each bind NAD(+). Residues glycine 344 and glycine 346 each coordinate K(+). Serine 347 contacts IMP. K(+) is bound at residue cysteine 349. Residue cysteine 349 is the Thioimidate intermediate of the active site. IMP is bound by residues aspartate 382 to glycine 384, glycine 405 to glycine 406, and tyrosine 430 to glycine 434. Arginine 460 acts as the Proton acceptor in catalysis. Residue glutamine 472 participates in IMP binding. K(+) contacts are provided by glutamate 531 and glycine 532.

The protein belongs to the IMPDH/GMPR family. As to quaternary structure, homotetramer. The cofactor is K(+).

It is found in the cytoplasm. It catalyses the reaction IMP + NAD(+) + H2O = XMP + NADH + H(+). It participates in purine metabolism; XMP biosynthesis via de novo pathway; XMP from IMP: step 1/1. Its activity is regulated as follows. Mycophenolic acid (MPA) is a non-competitive inhibitor that prevents formation of the closed enzyme conformation by binding to the same site as the amobile flap. In contrast, mizoribine monophosphate (MZP) is a competitive inhibitor that induces the closed conformation. MPA is a potent inhibitor of mammalian IMPDHs but a poor inhibitor of the bacterial enzymes. MZP is a more potent inhibitor of bacterial IMPDH. Functionally, catalyzes the conversion of inosine 5'-phosphate (IMP) to xanthosine 5'-phosphate (XMP), the first committed and rate-limiting step in the de novo synthesis of guanine nucleotides, and therefore plays an important role in the regulation of cell growth. This Aspergillus fumigatus (strain ATCC MYA-4609 / CBS 101355 / FGSC A1100 / Af293) (Neosartorya fumigata) protein is Inosine-5'-monophosphate dehydrogenase.